Reading from the N-terminus, the 142-residue chain is Endoribonuclease YbeY (142 aa).

Zn(2+) is bound by residues H107, H111, and D117.

Belongs to the endoribonuclease YbeY family. Requires Zn(2+) as cofactor.

The protein localises to the cytoplasm. In terms of biological role, single strand-specific metallo-endoribonuclease involved in late-stage 70S ribosome quality control and in maturation of the 3' terminus of the 16S rRNA. This Parabacteroides distasonis (strain ATCC 8503 / DSM 20701 / CIP 104284 / JCM 5825 / NCTC 11152) protein is Endoribonuclease YbeY.